Here is a 97-residue protein sequence, read N- to C-terminus: Small ribosomal subunit protein bS20c (97 aa).

A compositionally biased stretch (polar residues) spans 1 to 15 (MSKNVSAIKKNQVSL). Residues 1–20 (MSKNVSAIKKNQVSLRNKRK) form a disordered region.

The protein belongs to the bacterial ribosomal protein bS20 family.

Its subcellular location is the plastid. It localises to the chloroplast. In terms of biological role, binds directly to 16S ribosomal RNA. In Gracilaria tenuistipitata var. liui (Red alga), this protein is Small ribosomal subunit protein bS20c.